The primary structure comprises 79 residues: Large ribosomal subunit protein uL24 (79 aa).

Belongs to the universal ribosomal protein uL24 family. Part of the 50S ribosomal subunit.

In terms of biological role, one of two assembly initiator proteins, it binds directly to the 5'-end of the 23S rRNA, where it nucleates assembly of the 50S subunit. One of the proteins that surrounds the polypeptide exit tunnel on the outside of the subunit. In Lactobacillus delbrueckii subsp. bulgaricus (strain ATCC BAA-365 / Lb-18), this protein is Large ribosomal subunit protein uL24.